The primary structure comprises 212 residues: Golgi SNAP receptor complex member 2 homolog memb-1 (212 aa).

At 1-189 (MEAQYQSTNF…QVIDRRVRED (189 aa)) the chain is on the cytoplasmic side. The chain crosses the membrane as a helical; Anchor for type IV membrane protein span at residues 190–210 (WIFVIGCIVCCIFMYAFYRFW). At 211–212 (RG) the chain is on the vesicular side.

The protein belongs to the GOSR2 family. Part of a unique SNARE complex.

It is found in the golgi apparatus. Its subcellular location is the cis-Golgi network membrane. The protein resides in the golgi apparatus membrane. It localises to the endoplasmic reticulum membrane. In terms of biological role, involved in transport of proteins from the cis/medial-Golgi to the trans-Golgi network. The chain is Golgi SNAP receptor complex member 2 homolog memb-1 from Caenorhabditis briggsae.